Reading from the N-terminus, the 429-residue chain is Argininosuccinate lyase (429 aa).

Belongs to the lyase 1 family. Argininosuccinate lyase subfamily.

Its subcellular location is the cytoplasm. The enzyme catalyses 2-(N(omega)-L-arginino)succinate = fumarate + L-arginine. It functions in the pathway amino-acid biosynthesis; L-arginine biosynthesis; L-arginine from L-ornithine and carbamoyl phosphate: step 3/3. This Pyrobaculum islandicum (strain DSM 4184 / JCM 9189 / GEO3) protein is Argininosuccinate lyase.